The sequence spans 385 residues: Glucose-fructose oxidoreductase domain-containing protein 2 (385 aa).

The N-terminal stretch at 1 to 25 (MKLLPGVGVFGTGSSARVLVPLLRA) is a signal peptide.

Belongs to the Gfo/Idh/MocA family.

The protein resides in the secreted. It localises to the extracellular space. Its subcellular location is the extracellular matrix. Its function is as follows. Promotes matrix assembly. This Mus musculus (Mouse) protein is Glucose-fructose oxidoreductase domain-containing protein 2 (Gfod2).